The primary structure comprises 252 residues: Uridylate kinase (252 aa).

20–23 (KLSG) is an ATP binding site. Residues 28-33 (GGGGLG) are involved in allosteric activation by GTP. Position 62 (G62) interacts with UMP. Positions 63 and 67 each coordinate ATP. UMP-binding positions include D82 and 143-150 (MGMPYFST). Residues N171, Y177, and D180 each contribute to the ATP site.

It belongs to the UMP kinase family. As to quaternary structure, homohexamer.

The protein resides in the cytoplasm. It catalyses the reaction UMP + ATP = UDP + ADP. It participates in pyrimidine metabolism; CTP biosynthesis via de novo pathway; UDP from UMP (UMPK route): step 1/1. With respect to regulation, allosterically activated by GTP. Inhibited by UTP. In terms of biological role, catalyzes the reversible phosphorylation of UMP to UDP. The polypeptide is Uridylate kinase (Streptomyces avermitilis (strain ATCC 31267 / DSM 46492 / JCM 5070 / NBRC 14893 / NCIMB 12804 / NRRL 8165 / MA-4680)).